Here is a 373-residue protein sequence, read N- to C-terminus: UDP-3-O-acylglucosamine N-acyltransferase 2 (373 aa).

The active-site Proton acceptor is His257. Positions 346–373 (DGRTAASAEAAAPSSDATGVDQPDQAAS) are disordered. A compositionally biased stretch (low complexity) spans 350–362 (AASAEAAAPSSDA).

This sequence belongs to the transferase hexapeptide repeat family. LpxD subfamily. As to quaternary structure, homotrimer.

It catalyses the reaction a UDP-3-O-[(3R)-3-hydroxyacyl]-alpha-D-glucosamine + a (3R)-hydroxyacyl-[ACP] = a UDP-2-N,3-O-bis[(3R)-3-hydroxyacyl]-alpha-D-glucosamine + holo-[ACP] + H(+). It participates in bacterial outer membrane biogenesis; LPS lipid A biosynthesis. Functionally, catalyzes the N-acylation of UDP-3-O-acylglucosamine using 3-hydroxyacyl-ACP as the acyl donor. Is involved in the biosynthesis of lipid A, a phosphorylated glycolipid that anchors the lipopolysaccharide to the outer membrane of the cell. The protein is UDP-3-O-acylglucosamine N-acyltransferase 2 of Rhodopseudomonas palustris (strain BisB18).